The primary structure comprises 561 residues: Arginine--tRNA ligase (561 aa).

A 'HIGH' region motif is present at residues 108–118; the sequence is PNVAKEMHVGH.

It belongs to the class-I aminoacyl-tRNA synthetase family. As to quaternary structure, monomer.

It is found in the cytoplasm. The enzyme catalyses tRNA(Arg) + L-arginine + ATP = L-arginyl-tRNA(Arg) + AMP + diphosphate. This is Arginine--tRNA ligase from Haemophilus ducreyi (strain 35000HP / ATCC 700724).